The sequence spans 1245 residues: ATP-dependent helicase/deoxyribonuclease subunit B (1245 aa).

A disordered region spans residues 737-758; sequence WDDQNNAPTTDLPDRPNPRASE. Residues 748 to 758 show a composition bias toward basic and acidic residues; the sequence is LPDRPNPRASE.

The protein belongs to the helicase family. AddB/RexB type 2 subfamily. As to quaternary structure, heterodimer of AddA and RexB. Requires Mg(2+) as cofactor.

Functionally, the heterodimer acts as both an ATP-dependent DNA helicase and an ATP-dependent, dual-direction single-stranded exonuclease. Recognizes the chi site generating a DNA molecule suitable for the initiation of homologous recombination. This subunit has 5' -&gt; 3' nuclease activity but not helicase activity. The polypeptide is ATP-dependent helicase/deoxyribonuclease subunit B (Limosilactobacillus fermentum (strain NBRC 3956 / LMG 18251) (Lactobacillus fermentum)).